Here is a 200-residue protein sequence, read N- to C-terminus: Transcriptional repressor NrdR (200 aa).

Residues 3–34 (CPFCQNPDTKVIDTRISDDGHSIRRRRECPNC) fold into a zinc finger. The ATP-cone domain occupies 46–136 (LLVKKRSGNV…VYQNFEDLED (91 aa)).

The protein belongs to the NrdR family. It depends on Zn(2+) as a cofactor.

Functionally, negatively regulates transcription of bacterial ribonucleotide reductase nrd genes and operons by binding to NrdR-boxes. The protein is Transcriptional repressor NrdR of Bifidobacterium animalis subsp. lactis (strain AD011).